We begin with the raw amino-acid sequence, 403 residues long: MTESTFPQYPRLVLSKGREKSLLRRHPWVFSGAVSRLEGKANLGETIDIVDHQGKWLARGAWSPASQIRARVWTFDKAESIDIAFFTRRLRQAQQWRDWLAKKDGLDSYRLIAGESDGLPGVTIDRFGHFLVLQLLSAGAEYQRAALISALQTCYPDCAIYDRSDVAVRKKEGMALTQGPVTGELPPALLPIEEHGMKLLVDIQGGHKTGYYLDQRDSRLATRRYVENQRVLNCFSYTGGFAVSALMGGCRQVVSVDTSQDALDIARQNVELNQLDLSKAEFVRDDVFKLLRAYREHGEKFDVIIMDPPKFVENKSQLMGACRGYKDINMLAIQLLNPGGILLTFSCSGLMTSDLFQKIIADAAIDAGRDVQFIEQFRQAADHPVIATYPEGLYLKGFACRVM.

The PUA domain occupies 9–88; it reads YPRLVLSKGR…ESIDIAFFTR (80 aa).

The protein belongs to the methyltransferase superfamily. RlmI family.

It localises to the cytoplasm. The catalysed reaction is cytidine(1962) in 23S rRNA + S-adenosyl-L-methionine = 5-methylcytidine(1962) in 23S rRNA + S-adenosyl-L-homocysteine + H(+). Specifically methylates the cytosine at position 1962 (m5C1962) of 23S rRNA. This Salmonella agona (strain SL483) protein is Ribosomal RNA large subunit methyltransferase I.